Here is a 147-residue protein sequence, read N- to C-terminus: Large ribosomal subunit protein bL9 (147 aa).

The protein belongs to the bacterial ribosomal protein bL9 family.

Functionally, binds to the 23S rRNA. The polypeptide is Large ribosomal subunit protein bL9 (Campylobacter lari (strain RM2100 / D67 / ATCC BAA-1060)).